The chain runs to 234 residues: Nuclear transcription factor Y subunit B-6 (234 aa).

Disordered stretches follow at residues 1 to 21 (MERGGFHGYRKLSVNNTTPSP) and 35 to 55 (MRPPEFNQPNKTSNGGEEECT). The DNA-binding element occupies 63 to 69 (MPIANVI). Positions 90-101 (IQECVSEYISFI) are subunit association domain (SAD). The disordered stretch occupies residues 206 to 234 (NEPNSKMSGSSSGASGARVEVFPTQQHKY). A compositionally biased stretch (low complexity) spans 213–222 (SGSSSGASGA).

This sequence belongs to the NFYB/HAP3 subunit family. As to quaternary structure, heterotrimeric transcription factor composed of three components, NF-YA, NF-YB and NF-YC. NF-YB and NF-YC must interact and dimerize for NF-YA association and DNA binding. Interacts with PRN1. Binds directly with DPB3-1. In terms of tissue distribution, expressed in roots, flowers and developing siliques. Present in etiolated seedlings.

It localises to the nucleus. Component of the NF-Y/HAP transcription factor complex. The NF-Y complex stimulates the transcription of various genes by recognizing and binding to a CCAAT motif in promoters. Plays a role in the regulation of the embryogenesis. Involved in the abscisic acid (ABA) signaling pathway. The sequence is that of Nuclear transcription factor Y subunit B-6 from Arabidopsis thaliana (Mouse-ear cress).